Reading from the N-terminus, the 565-residue chain is Effector protease OspD3 (565 aa).

It belongs to the Toxin_15 family.

It localises to the secreted. In terms of biological role, effector protease that disrupts necroptosis in host cells by mediating proteolytic cleavage of host RIPK1 and RIPK3. This is Effector protease OspD3 from Shigella flexneri.